We begin with the raw amino-acid sequence, 136 residues long: Small ribosomal subunit protein uS8 (136 aa).

Belongs to the universal ribosomal protein uS8 family. In terms of assembly, part of the 30S ribosomal subunit. Contacts proteins S5 and S12.

Functionally, one of the primary rRNA binding proteins, it binds directly to 16S rRNA central domain where it helps coordinate assembly of the platform of the 30S subunit. This is Small ribosomal subunit protein uS8 from Synechococcus sp. (strain JA-2-3B'a(2-13)) (Cyanobacteria bacterium Yellowstone B-Prime).